Consider the following 466-residue polypeptide: MAKTLYEKVWDSHVVVAPEGEAPIIYVDRHLVHEVTSPQAFSGVKVAGRQLRAPQKTFATMDHNTSTTSASLDALSPMARTQVETLEQNCKEFGVRLYDIHHKNQGIVHVMGPELGITLPGTVIVCGDSHTATHGAFGALAFGIGTSEVEHVMATQTLRQLKAKTMKIEVRGHVASGITAKDIVLAIIGKIGMDGGTGYVVEFCGEAIEALSMEGRMTVCNMAIEMGAKAGMIAPDATTAEYLEGREFSPKGESWSQAVAAWEQLKTDEGAVFDASVVLDAIDIAPQLTWGTNPGQVVAIDQLVPNPLDATNSTVRSSIEKALEYVDLTAGTLMTDVSINKVFIGSCTNSRIEDLRAAAVHAKGRKVADGVKAIVVPGSGLVKEQAEAEGLDKIFTDAGFEWRLPGCSMCLAMNDDKLEAGDRCASTSNRNFEGRQGRGSRTHLVSPAMAAAAAVAGHFVDIRKPY.

[4Fe-4S] cluster-binding residues include Cys347, Cys407, and Cys410.

It belongs to the aconitase/IPM isomerase family. LeuC type 1 subfamily. Heterodimer of LeuC and LeuD. Requires [4Fe-4S] cluster as cofactor.

It carries out the reaction (2R,3S)-3-isopropylmalate = (2S)-2-isopropylmalate. It functions in the pathway amino-acid biosynthesis; L-leucine biosynthesis; L-leucine from 3-methyl-2-oxobutanoate: step 2/4. Catalyzes the isomerization between 2-isopropylmalate and 3-isopropylmalate, via the formation of 2-isopropylmaleate. This Shewanella pealeana (strain ATCC 700345 / ANG-SQ1) protein is 3-isopropylmalate dehydratase large subunit.